The sequence spans 546 residues: Intermembrane transport protein PqiB (546 aa).

Residues 1–15 (MESNNGEAKIQKVKN) lie on the Cytoplasmic side of the membrane. Residues 16 to 36 (WSPVWIFPIVTALIGAWVLFY) traverse the membrane as a helical segment. The Periplasmic segment spans residues 37–546 (HYSHQGPEVT…KDPEPKRAKQ (510 aa)). MCE/MlaD stretches follow at residues 42 to 133 (GPEV…LQPG), 158 to 217 (IRVI…NNVR), and 285 to 389 (HIDY…LDFY). A coiled-coil region spans residues 437–464 (IEQATSTLSESQRTMKNLQTTLDSMNKI).

The protein belongs to the PqiB family. In terms of assembly, homohexamer. May form a complex composed of PqiA, PqiB and PqiC. Interacts with PqiC.

The protein localises to the cell inner membrane. Functionally, forms a tunnel that spans the entire periplasmic space. Could be implicated in lipid transport between the inner membrane and the outer membrane. Binds phospholipids. Required for outer membrane homeostasis. Contributes to membrane integrity. In Escherichia coli (strain K12), this protein is Intermembrane transport protein PqiB.